Reading from the N-terminus, the 279-residue chain is Pantothenate synthetase (279 aa).

Position 26–33 (26–33) interacts with ATP; that stretch reads MGNLHEGH. The active-site Proton donor is the His-33. Gln-57 contacts (R)-pantoate. Gln-57 lines the beta-alanine pocket. Position 144–147 (144–147) interacts with ATP; it reads GKKD. Gln-150 is a binding site for (R)-pantoate. ATP-binding positions include Val-173 and 181-184; that span reads LSSR.

Belongs to the pantothenate synthetase family. In terms of assembly, homodimer.

The protein localises to the cytoplasm. The catalysed reaction is (R)-pantoate + beta-alanine + ATP = (R)-pantothenate + AMP + diphosphate + H(+). It participates in cofactor biosynthesis; (R)-pantothenate biosynthesis; (R)-pantothenate from (R)-pantoate and beta-alanine: step 1/1. Functionally, catalyzes the condensation of pantoate with beta-alanine in an ATP-dependent reaction via a pantoyl-adenylate intermediate. This is Pantothenate synthetase from Burkholderia cenocepacia (strain ATCC BAA-245 / DSM 16553 / LMG 16656 / NCTC 13227 / J2315 / CF5610) (Burkholderia cepacia (strain J2315)).